Reading from the N-terminus, the 456-residue chain is ACT domain-containing protein ACR5 (456 aa).

4 ACT domains span residues 39–115 (VIKV…FSPS), 130–207 (VVEL…SSGR), 271–347 (IVMI…VSEG), and 349–432 (KLEL…PSPQ).

As to expression, expressed in stems and siliques.

Its function is as follows. May bind amino acids. This chain is ACT domain-containing protein ACR5, found in Arabidopsis thaliana (Mouse-ear cress).